The sequence spans 184 residues: ATP synthase subunit b 1 (184 aa).

Residues 4–24 traverse the membrane as a helical segment; that stretch reads LSILAALAASPAMAATGPFFS.

Belongs to the ATPase B chain family. In terms of assembly, F-type ATPases have 2 components, F(1) - the catalytic core - and F(0) - the membrane proton channel. F(1) has five subunits: alpha(3), beta(3), gamma(1), delta(1), epsilon(1). F(0) has three main subunits: a(1), b(2) and c(10-14). The alpha and beta chains form an alternating ring which encloses part of the gamma chain. F(1) is attached to F(0) by a central stalk formed by the gamma and epsilon chains, while a peripheral stalk is formed by the delta and b chains.

It is found in the cell inner membrane. F(1)F(0) ATP synthase produces ATP from ADP in the presence of a proton or sodium gradient. F-type ATPases consist of two structural domains, F(1) containing the extramembraneous catalytic core and F(0) containing the membrane proton channel, linked together by a central stalk and a peripheral stalk. During catalysis, ATP synthesis in the catalytic domain of F(1) is coupled via a rotary mechanism of the central stalk subunits to proton translocation. In terms of biological role, component of the F(0) channel, it forms part of the peripheral stalk, linking F(1) to F(0). This chain is ATP synthase subunit b 1, found in Cereibacter sphaeroides (strain ATCC 17025 / ATH 2.4.3) (Rhodobacter sphaeroides).